The following is a 424-amino-acid chain: MEEIPSLVIDPGSCWTRFGYAGEESPMTILPSYYGVRSDVTGRNKYVVDELQIHAPIPGMEVKNGKSNGIIQDWESTLYTWERGLKEKLQVNPTEYAMMITEPSWNPQSVRQQIMEAAFEQLHVPAFYLTKQAVCVAFANSKSTALIVDIGSDNASVTPVVDGLIIRKGIFKQSLAGDFLNANIEQLFNTMNIEFPPHYRIARKSVAIQQSGNMANGSADAVKPAVLYPPIQDLTSSYEIFQKRRVIEEWKESVLDVLDTPFDEAKASSRNPKPFEFPDGVTHKFGQERFRISEILFNPSFSASRSAETTPPQGSVGLHELVYQSILACDSELRSPLLNNIVVTGGTSLIPGLSERLQAEVQRLATGSRINVHTAETASATSNAVWFGGSILASLDNFQHLWVSKQEYDEVGVDRALFVEKRCK.

It belongs to the actin family. In terms of assembly, component of the RSC complex composed of at least arp9, arp42, rsc1, rsc4, rsc7, rsc9, rsc58, sfh1, snf21, ssr1, ssr2, ssr3 and ssr4. The complex interacts with histone and histone variant components of centromeric chromatin. Component of the SWI/SNF global transcription activator complex composed of at least arp9, arp42, snf5, snf22, snf30, sbf59, sol1, ssr1, ssr2, ssr3, ssr4 and tfg3.

It localises to the cytoplasm. The protein localises to the nucleus. Its function is as follows. Component of the chromatin structure remodeling complex (RSC), which is involved in transcription regulation and nucleosome positioning. Controls particularly membrane and organelle development genes. Part of the SWI/SNF complex, an ATP-dependent chromatin remodeling complex, required for the positive and negative regulation of gene expression of a large number of genes. It changes chromatin structure by altering DNA-histone contacts within a nucleosome, leading eventually to a change in nucleosome position, thus facilitating or repressing binding of gene-specific transcription factors. The chain is SWI/SNF and RSC complexes subunit arp42 (arp42) from Schizosaccharomyces pombe (strain 972 / ATCC 24843) (Fission yeast).